Consider the following 64-residue polypeptide: Large ribosomal subunit protein bL28 (64 aa).

This sequence belongs to the bacterial ribosomal protein bL28 family.

This Desulfotalea psychrophila (strain LSv54 / DSM 12343) protein is Large ribosomal subunit protein bL28.